Consider the following 504-residue polypeptide: Kinesin light chain 3 (504 aa).

Residues 90–150 (ALSAHVGALE…EEEKRHLEFL (61 aa)) are a coiled coil. Positions 153-197 (LRQYDPPAESQQSESPPRRDSLASLFPSEEEERKGPEAAGAAAAQ) are disordered. Positions 158–167 (PPAESQQSES) are enriched in low complexity. A Phosphoserine modification is found at serine 173. TPR repeat units follow at residues 207–240 (LRTL…LERS), 249–282 (ATML…REQT), 291–324 (AATL…REKV), 333–366 (AKQL…YEAL), and 375–408 (AKTK…EDLP). The tract at residues 411-438 (LGAPNTGTAGDAEQALRRSSSLSKIRES) is disordered. Serine 466 bears the Phosphoserine mark. Positions 472–504 (VDAPRAPGTQFPSWHLDKAPRTLSASTQDLSPH) are disordered. A compositionally biased stretch (polar residues) spans 494 to 504 (LSASTQDLSPH). Threonine 498 is modified (phosphothreonine). A Phosphoserine modification is found at serine 502.

The protein belongs to the kinesin light chain family. In terms of assembly, oligomer composed of two heavy chains and two light chains. Associates with microtubulin in an ATP-dependent manner. Interacts with KIF5C. Interacts with ODF1. Interacts with LRGUK. Interacts with VDAC2.

The protein resides in the cytoplasm. It is found in the cytoskeleton. It localises to the mitochondrion. Kinesin is a microtubule-associated force-producing protein that may play a role in organelle transport. Plays a role during spermiogenesis in the development of the sperm tail midpiece and in the normal function of spermatozoa. May play a role in the formation of the mitochondrial sheath formation in the developing spermatid midpiece. The polypeptide is Kinesin light chain 3 (KLC3) (Homo sapiens (Human)).